The chain runs to 491 residues: Cyclin-B1-5 (491 aa).

The region spanning 275-347 is the Cyclin N-terminal domain; it reads DMYSFYKEVE…VKAVPKRELQ (73 aa).

Belongs to the cyclin family. Cyclin AB subfamily. Expressed in roots, stems and flowers.

In Arabidopsis thaliana (Mouse-ear cress), this protein is Cyclin-B1-5 (CYCB1-5).